A 305-amino-acid polypeptide reads, in one-letter code: NAD kinase (305 aa).

Catalysis depends on D76, which acts as the Proton acceptor. NAD(+)-binding positions include 76 to 77, 150 to 151, R161, and D180; these read DG and ND.

Belongs to the NAD kinase family. Requires a divalent metal cation as cofactor.

Its subcellular location is the cytoplasm. The enzyme catalyses NAD(+) + ATP = ADP + NADP(+) + H(+). Involved in the regulation of the intracellular balance of NAD and NADP, and is a key enzyme in the biosynthesis of NADP. Catalyzes specifically the phosphorylation on 2'-hydroxyl of the adenosine moiety of NAD to yield NADP. The protein is NAD kinase of Treponema pallidum (strain Nichols).